The sequence spans 592 residues: Putative uric acid sigma-54-dependent transcriptional regulator UacR (592 aa).

A PAS domain is found at 158–229 (ISKIFATMID…HMQHIVSWDD (72 aa)). Positions 272–502 (LVGECRVMRQ…LSNLMEYLVN (231 aa)) constitute a Sigma-54 factor interaction domain. ATP contacts are provided by residues 300–307 (GESGTGKE) and 364–373 (ANTGTLFLDE). The segment at residues 567–585 (KQVADELGIGIATLYRKIK) is a DNA-binding region (H-T-H motif).

Essential for both formate-dependent and formate-independent uric acid degradation. May be directly involved in the transcription of uacF in response to hypoxanthine, xanthine, and uric acid. The sequence is that of Putative uric acid sigma-54-dependent transcriptional regulator UacR from Escherichia coli (strain K12).